Reading from the N-terminus, the 686-residue chain is MARDLLFEIGTEEMPAGLIGKIRSDLKDLAINTLEDKRLDFKECKVFSTPRRLVLFVKELAEKQEEKREVVKGPARSIAFEDDGTPTRAAKGFSRAQGVEVDDLIIKDDYVYVEKIEQGQDTAGLLKDILPGLINKLPLPRSMRWADYNFKFIRPIRWLLALFGEEIISFSMAGVQSGAYTRGHRFLVKDRLEVKDPDHYFDVMEKGYIIVDHNKRRELILKQIREIEKEIGKVMVEDDLLTEVVDLVEYPTAFYGKFDRSYLELPDDVLITSMAEHQRYFPVIDEDGSLSPYFVGVRDGIEDYIEEVRYGNEMVLRARLADARFFFEEDLKVSIEERQKELEEIVFQEDLGSMMDKVKRLKQLVIQIGKSLNLKESQLQSLIRAAELSKNDLVTEMVNEFTKLQGVMGREYALINGEDEEVATAIYEQYLPRYSGDRLPQTLYGRILSIADKIDNITSHFSLGMIPSGSQDPFALRRQANGIVNIIIDAQLPLKLSSLLNWSIEVLEPGDKDFVNEEKSFLLQRLETILDERGIRYDIINSVVRVGDDDPNNILSRAEAVMSLRKENPDLFVDLIQGLVRARNLASKGEGNNDINPEYFECREEKELYDIYRKIKDEIQRQFKKKNYLSGLKKLVDVKEPVDNFLDNVVVMVEDERIKNNRLALLQEISNLVSGVMNISEIALDD.

This sequence belongs to the class-II aminoacyl-tRNA synthetase family. As to quaternary structure, tetramer of two alpha and two beta subunits.

Its subcellular location is the cytoplasm. It catalyses the reaction tRNA(Gly) + glycine + ATP = glycyl-tRNA(Gly) + AMP + diphosphate. This Halothermothrix orenii (strain H 168 / OCM 544 / DSM 9562) protein is Glycine--tRNA ligase beta subunit.